Here is a 534-residue protein sequence, read N- to C-terminus: Cytochrome P450 monooxygenase ascG (534 aa).

The chain crosses the membrane as a helical span at residues 13 to 33 (FVASFPALSAAAGLIVAISFI). Asn-466 is a glycosylation site (N-linked (GlcNAc...) asparagine). Cys-469 contacts heme.

Belongs to the cytochrome P450 family. Heme is required as a cofactor.

The protein localises to the membrane. It carries out the reaction ilicicolin C + NADPH + O2 + H(+) = ascochlorin + NADP(+) + 2 H2O. The protein operates within secondary metabolite biosynthesis; terpenoid biosynthesis. Its function is as follows. Cytochrome P450 monooxygenase; part of the asc-1 gene cluster that mediates the biosynthesis of both ascochlorin and ascofuranone, a strong inhibitor of cyanide-insensitive alternative oxidases and a promising drug candidate against African trypanosomiasis. The first step in the pathway is performed by the non-reducing polyketide synthase ascC that produces orsellinic acid by condensing acetyl-CoA with 3 malonyl-CoA units. Orsellinic acid is then prenylated by the prenyltransferase ascA to yield ilicicolinic acid B. Ilicicolinic acid B is further reduced to ilicicolin B by the reductase ascB. The halogenase ascD then chlorinates ilicicolin B to produce ilicicolin A which is converted to ilicicolin A epoxide by the cytochrome P450 monooxygenase ascE that catalyzes stereoselective epoxidation of the terminal double bond of the prenyl group. Ilicicolin A epoxide is the last common precursor for the biosynthesis of ascofuranone and ascochlorin. The terpene cyclase ascF produces a monocyclic terpene, and the cyclization reaction is proposed to be initiated by protonation of the terminal epoxide of ilicicolin A epoxide to generate a monocyclic tertiarycation, which is followed by a series of hydride and methyl shifts with abstraction of proton, leading to the formation of the (14S,15R,19R)-trimethylcyclohexanone ring structure of ilicicolin C, which is finally reduced to ascochlorin by the dehydrogenase ascG. On the other hand, ilicicolin A epoxide is hydroxylated by the cytochrome P450 monooxygenase ascH, and the resultant product is cyclized by the terpene cyclase ascI to ascofuranol via protonation-initiated epoxide ring opening, which facilitates the 6-endo-tet cyclization to form the tetrahy-drofuran ring. Finally, ascofuranol is oxidized into ascofuranone by ascJ. The sequence is that of Cytochrome P450 monooxygenase ascG from Acremonium egyptiacum (Oospora egyptiaca).